Reading from the N-terminus, the 343-residue chain is Allantoicase (343 aa).

Belongs to the allantoicase family.

It catalyses the reaction allantoate + H2O = (S)-ureidoglycolate + urea. Its pathway is nitrogen metabolism; (S)-allantoin degradation; (S)-ureidoglycolate from allantoate (aminidohydrolase route): step 1/1. Functionally, utilization of purines as secondary nitrogen sources, when primary sources are limiting. The protein is Allantoicase (DAL2) of Saccharomyces cerevisiae (strain ATCC 204508 / S288c) (Baker's yeast).